Reading from the N-terminus, the 130-residue chain is Ribosome-binding factor A (130 aa).

Residues 111–130 are disordered; it reads RDLDDVGPEATSSDEDAEQR.

The protein belongs to the RbfA family. As to quaternary structure, monomer. Binds 30S ribosomal subunits, but not 50S ribosomal subunits or 70S ribosomes.

The protein resides in the cytoplasm. One of several proteins that assist in the late maturation steps of the functional core of the 30S ribosomal subunit. Associates with free 30S ribosomal subunits (but not with 30S subunits that are part of 70S ribosomes or polysomes). Required for efficient processing of 16S rRNA. May interact with the 5'-terminal helix region of 16S rRNA. This Xanthomonas euvesicatoria pv. vesicatoria (strain 85-10) (Xanthomonas campestris pv. vesicatoria) protein is Ribosome-binding factor A.